Here is a 160-residue protein sequence, read N- to C-terminus: Large ribosomal subunit protein eL14 (160 aa).

The segment at 136–160 (SDGTPRILKKDRRERLRAEKAKAKK) is disordered. Basic and acidic residues predominate over residues 146 to 160 (DRRERLRAEKAKAKK).

Belongs to the eukaryotic ribosomal protein eL14 family.

In Drosophila virilis (Fruit fly), this protein is Large ribosomal subunit protein eL14 (RpL14).